The following is a 614-amino-acid chain: Sorting nexin-18 (614 aa).

One can recognise an SH3 domain in the interval 1–61 (MALRARALYD…PASYVQVIRA (61 aa)). The segment at 85 to 218 (GFEPLPAAPP…SQELGHGEPQ (134 aa)) is disordered. The span at 90–101 (PAAPPAAFPPLL) shows a compositional bias: pro residues. The segment covering 141–151 (SDDDWDDEWDD) has biased composition (acidic residues). The region spanning 266–376 (FQCTIDDPTK…HFLTCPSSTD (111 aa)) is the PX domain. Residues R302, K304, and R342 each contribute to the a 1,2-diacyl-sn-glycero-3-phospho-(1D-myo-inositol-4,5-bisphosphate) site. In terms of domain architecture, BAR spans 411 to 614 (LQEVESKIDG…EEALHKYDSV (204 aa)).

It belongs to the sorting nexin family. Heterodimer with SNX9. Interacts with ITCH. Interacts with dynamin-2 (DNM2), SYNJ1 and WASL. Interacts with the AP-1 complex. Interacts with FCHSD1 (via the F-BAR domain).

Its subcellular location is the endomembrane system. The protein resides in the endosome membrane. It is found in the recycling endosome membrane. It localises to the cell membrane. The protein localises to the cytoplasmic vesicle membrane. Involved in endocytosis and intracellular vesicle trafficking, both during interphase and at the end of mitosis. Required for efficient progress through mitosis and cytokinesis. Required for normal formation of the cleavage furrow at the end of mitosis. Plays a role in endocytosis via clathrin-coated pits, but also clathrin-independent, actin-dependent fluid-phase endocytosis. Plays a role in macropinocytosis. Binds to membranes enriched in phosphatidylinositol 4,5-bisphosphate and promotes membrane tubulation. Stimulates the GTPase activity of DNM2. Promotes DNM2 location at the plasma membrane. Together with DNM2, involved in autophagosome assembly by regulating trafficking from recycling endosomes of phospholipid scramblase ATG9A. The polypeptide is Sorting nexin-18 (Mus musculus (Mouse)).